The following is an 895-amino-acid chain: Alanine--tRNA ligase (895 aa).

Zn(2+) contacts are provided by His-586, His-590, Cys-690, and His-694.

This sequence belongs to the class-II aminoacyl-tRNA synthetase family. The cofactor is Zn(2+).

Its subcellular location is the cytoplasm. The enzyme catalyses tRNA(Ala) + L-alanine + ATP = L-alanyl-tRNA(Ala) + AMP + diphosphate. In terms of biological role, catalyzes the attachment of alanine to tRNA(Ala) in a two-step reaction: alanine is first activated by ATP to form Ala-AMP and then transferred to the acceptor end of tRNA(Ala). Also edits incorrectly charged Ser-tRNA(Ala) and Gly-tRNA(Ala) via its editing domain. This chain is Alanine--tRNA ligase, found in Korarchaeum cryptofilum (strain OPF8).